The following is a 164-amino-acid chain: Peptide deformylase (164 aa).

C87 and H129 together coordinate Fe cation. Residue E130 is part of the active site. H133 contributes to the Fe cation binding site.

The protein belongs to the polypeptide deformylase family. The cofactor is Fe(2+).

It carries out the reaction N-terminal N-formyl-L-methionyl-[peptide] + H2O = N-terminal L-methionyl-[peptide] + formate. Its function is as follows. Removes the formyl group from the N-terminal Met of newly synthesized proteins. Requires at least a dipeptide for an efficient rate of reaction. N-terminal L-methionine is a prerequisite for activity but the enzyme has broad specificity at other positions. The protein is Peptide deformylase of Thermotoga petrophila (strain ATCC BAA-488 / DSM 13995 / JCM 10881 / RKU-1).